The following is a 262-amino-acid chain: tRNA pseudouridine synthase A (262 aa).

Residue Asp52 is the Nucleophile of the active site. Residue Tyr110 coordinates substrate.

The protein belongs to the tRNA pseudouridine synthase TruA family. As to quaternary structure, homodimer.

The enzyme catalyses uridine(38/39/40) in tRNA = pseudouridine(38/39/40) in tRNA. Formation of pseudouridine at positions 38, 39 and 40 in the anticodon stem and loop of transfer RNAs. In Hydrogenovibrio crunogenus (strain DSM 25203 / XCL-2) (Thiomicrospira crunogena), this protein is tRNA pseudouridine synthase A.